A 568-amino-acid chain; its full sequence is Circadian clock protein KaiC2 (568 aa).

KaiC domains follow at residues 11–250 and 251–485; these read IKCP…SVSQ and ERIS…LTGT. 2 positions are modified to phosphoserine; by autocatalysis: Ser423 and Ser424.

It belongs to the KaiC family. In terms of assembly, multimerizes, probably forming homohexamers, no interaction with KaiC1 or KaiC3 is seen.

The enzyme catalyses L-seryl-[protein] + ATP = O-phospho-L-seryl-[protein] + ADP + H(+). The catalysed reaction is L-threonyl-[protein] + ATP = O-phospho-L-threonyl-[protein] + ADP + H(+). It carries out the reaction ATP + H2O = ADP + phosphate + H(+). Its function is as follows. Autophosphorylates independently of KaiA. The protein is Circadian clock protein KaiC2 of Synechocystis sp. (strain ATCC 27184 / PCC 6803 / Kazusa).